Consider the following 518-residue polypeptide: Glutamate--cysteine ligase (518 aa).

This sequence belongs to the glutamate--cysteine ligase type 1 family. Type 1 subfamily.

The catalysed reaction is L-cysteine + L-glutamate + ATP = gamma-L-glutamyl-L-cysteine + ADP + phosphate + H(+). The protein operates within sulfur metabolism; glutathione biosynthesis; glutathione from L-cysteine and L-glutamate: step 1/2. The polypeptide is Glutamate--cysteine ligase (Citrobacter koseri (strain ATCC BAA-895 / CDC 4225-83 / SGSC4696)).